The primary structure comprises 403 residues: Tyrosine--tRNA ligase (403 aa).

A 'HIGH' region motif is present at residues 45–54 (PTAPDLHLGH). Residues 229–233 (KMSKS) carry the 'KMSKS' region motif. Residue lysine 232 participates in ATP binding. An S4 RNA-binding domain is found at 341-402 (VALCRLLAEA…GKRRFARITF (62 aa)).

This sequence belongs to the class-I aminoacyl-tRNA synthetase family. TyrS type 2 subfamily. Homodimer.

It is found in the cytoplasm. The enzyme catalyses tRNA(Tyr) + L-tyrosine + ATP = L-tyrosyl-tRNA(Tyr) + AMP + diphosphate + H(+). Its function is as follows. Catalyzes the attachment of tyrosine to tRNA(Tyr) in a two-step reaction: tyrosine is first activated by ATP to form Tyr-AMP and then transferred to the acceptor end of tRNA(Tyr). This chain is Tyrosine--tRNA ligase, found in Geobacter sulfurreducens (strain ATCC 51573 / DSM 12127 / PCA).